Here is a 226-residue protein sequence, read N- to C-terminus: PKHD-type hydroxylase Sde_2812 (226 aa).

In terms of domain architecture, Fe2OG dioxygenase spans 78 to 178 (KIFPPLFNCY…RLASFFWLQS (101 aa)). Residues histidine 96, aspartate 98, and histidine 159 each contribute to the Fe cation site. Residue arginine 169 participates in 2-oxoglutarate binding.

It depends on Fe(2+) as a cofactor. L-ascorbate serves as cofactor.

This Saccharophagus degradans (strain 2-40 / ATCC 43961 / DSM 17024) protein is PKHD-type hydroxylase Sde_2812.